Consider the following 222-residue polypeptide: Large ribosomal subunit protein uL1 (222 aa).

Belongs to the universal ribosomal protein uL1 family. As to quaternary structure, part of the 50S ribosomal subunit.

In terms of biological role, binds directly to 23S rRNA. Probably involved in E site tRNA release. Protein L1 is also a translational repressor protein, it controls the translation of its operon by binding to its mRNA. This chain is Large ribosomal subunit protein uL1, found in Pyrobaculum calidifontis (strain DSM 21063 / JCM 11548 / VA1).